The chain runs to 325 residues: Sensor histidine kinase YxdK (325 aa).

At 1–8 (MKLFLRSH) the chain is on the cytoplasmic side. A helical transmembrane segment spans residues 9–29 (AVLILLFLLQGLFVFFYYWFA). The Extracellular segment spans residues 30–33 (GLHS). Residues 34–54 (FSHLFYILGVQLLILAGYLAY) traverse the membrane as a helical segment. At 55-325 (RWYKDRGVYH…SVRFSFLTKM (271 aa)) the chain is on the cytoplasmic side. The 208-residue stretch at 118–325 (QWVHQVKTPL…SVRFSFLTKM (208 aa)) folds into the Histidine kinase domain. His-121 carries the phosphohistidine; by autocatalysis modification.

The protein resides in the cell membrane. The enzyme catalyses ATP + protein L-histidine = ADP + protein N-phospho-L-histidine.. Probable member of the two-component regulatory system YxdK/YxdJ. May activate YxdJ in response to the antibacterial protein LL-37. This Bacillus subtilis (strain 168) protein is Sensor histidine kinase YxdK (yxdK).